Here is a 64-residue protein sequence, read N- to C-terminus: Large ribosomal subunit protein bL35 (64 aa).

It belongs to the bacterial ribosomal protein bL35 family.

This chain is Large ribosomal subunit protein bL35, found in Acidothermus cellulolyticus (strain ATCC 43068 / DSM 8971 / 11B).